The chain runs to 394 residues: ATP phosphoribosyltransferase regulatory subunit (394 aa).

The protein belongs to the class-II aminoacyl-tRNA synthetase family. HisZ subfamily. In terms of assembly, heteromultimer composed of HisG and HisZ subunits.

The protein localises to the cytoplasm. It functions in the pathway amino-acid biosynthesis; L-histidine biosynthesis; L-histidine from 5-phospho-alpha-D-ribose 1-diphosphate: step 1/9. In terms of biological role, required for the first step of histidine biosynthesis. May allow the feedback regulation of ATP phosphoribosyltransferase activity by histidine. This is ATP phosphoribosyltransferase regulatory subunit from Teredinibacter turnerae (strain ATCC 39867 / T7901).